A 187-amino-acid chain; its full sequence is MYKILEIADVVKVPPEEFGKDLKETVKKILMEKYEGRLDKDVGFVLSIVDVKDIGEGKVVHGDGSAYHPVVFETLVYIPEMYELIEGEVVDVVEFGSFVRLGPLDGLIHVSQIMDDYVSYDPKREAIIGKETGKVLEIGDYVRARIVAISLKAERKRGSKIALTMRQPYLGKLEWIEEEKAKKQNQE.

Residues 82 to 166 (YELIEGEVVD…RGSKIALTMR (85 aa)) form the S1 motif domain.

This sequence belongs to the eukaryotic RPB7/RPC8 RNA polymerase subunit family. In terms of assembly, part of the RNA polymerase complex. Forms a stalk with Rpo4 that extends from the main structure.

It is found in the cytoplasm. It catalyses the reaction RNA(n) + a ribonucleoside 5'-triphosphate = RNA(n+1) + diphosphate. DNA-dependent RNA polymerase (RNAP) catalyzes the transcription of DNA into RNA using the four ribonucleoside triphosphates as substrates. The protein is DNA-directed RNA polymerase subunit Rpo7 of Methanocaldococcus jannaschii (strain ATCC 43067 / DSM 2661 / JAL-1 / JCM 10045 / NBRC 100440) (Methanococcus jannaschii).